The following is a 662-amino-acid chain: Probable quinol oxidase subunit 1 (662 aa).

Transmembrane regions (helical) follow at residues 14–34 (WMIT…IAVI) and 58–78 (IMYL…ALLI). H102 provides a ligand contact to Fe(II)-heme a. Helical transmembrane passes span 103-123 (GVIM…NIVV), 140-160 (VSFW…IIGG), 187-207 (IAIQ…FVTI), 228-248 (FITT…LALM), 273-293 (FFWV…FGIY), 311-331 (MVWA…HHFF), 336-356 (GALI…PTGV), and 376-396 (MLFS…GVML). Residues H279, Y283, H328, and H329 each contribute to the Cu cation site. A cross-link (1'-histidyl-3'-tyrosine (His-Tyr)) is located at residues 279-283 (HPEVY). H414 contacts heme a3. 5 consecutive transmembrane segments (helical) span residues 415 to 435 (FHYT…IFWY), 451 to 471 (CFWF…ILGL), 493 to 513 (ISTI…VSIV), 587 to 604 (PVGF…FFLI), and 608 to 627 (VIPA…YRSF). Position 416 (H416) interacts with Fe(II)-heme a.

It belongs to the heme-copper respiratory oxidase family. The cofactor is Cu cation. It depends on ferriheme a as a cofactor. Requires Heme A3. as cofactor.

It localises to the cell membrane. It carries out the reaction 2 a quinol + O2 = 2 a quinone + 2 H2O. The protein operates within energy metabolism; oxidative phosphorylation. Catalyzes quinol oxidation with the concomitant reduction of oxygen to water. The chain is Probable quinol oxidase subunit 1 (qoxB) from Staphylococcus aureus (strain USA300).